The sequence spans 277 residues: Large ribosomal subunit protein uL2 (277 aa).

Residues 219-277 (TVRGSVMNPNDHPHGGGEGRSPIGHPSPRTPWGKPALGYKTRKNKKYSDRFIVKRRHDK) are disordered.

It belongs to the universal ribosomal protein uL2 family. Part of the 50S ribosomal subunit. Forms a bridge to the 30S subunit in the 70S ribosome.

One of the primary rRNA binding proteins. Required for association of the 30S and 50S subunits to form the 70S ribosome, for tRNA binding and peptide bond formation. It has been suggested to have peptidyltransferase activity; this is somewhat controversial. Makes several contacts with the 16S rRNA in the 70S ribosome. The chain is Large ribosomal subunit protein uL2 from Clostridium botulinum (strain 657 / Type Ba4).